The sequence spans 447 residues: Rab GDP dissociation inhibitor alpha (447 aa).

Residue Ser427 is modified to Phosphoserine.

It belongs to the Rab GDI family. In terms of assembly, interacts with RHOH. Interacts with the non-phosphorylated forms of RAB1A, RAB3A, RAB5A, RAB5B, RAB5C, RAB8A, RAB8B, RAB12, RAB35, and RAB43. Interacts with RAB10. High expression in brain, lower in other tissues.

The protein localises to the cytoplasm. It localises to the golgi apparatus. It is found in the trans-Golgi network. Functionally, regulates the GDP/GTP exchange reaction of most Rab proteins by inhibiting the dissociation of GDP from them, and the subsequent binding of GTP to them. Promotes the dissociation of GDP-bound Rab proteins from the membrane and inhibits their activation. Promotes the dissociation of RAB1A, RAB3A, RAB5A and RAB10 from membranes. The polypeptide is Rab GDP dissociation inhibitor alpha (Gdi1) (Mus musculus (Mouse)).